The chain runs to 494 residues: Putative myristoylated protein 006R (494 aa).

G2 carries the N-myristoyl glycine; by host lipid modification. 3 helical membrane passes run 193–213 (VAALVAIVLGVPVVSVIGGIA), 214–234 (VAGRWMFPISILAGAGCLVVW), and 465–485 (WLLYLGVALIIVGIFGSILAF).

The protein belongs to the IIV-6 118L/458R family.

It localises to the membrane. The sequence is that of Putative myristoylated protein 006R from Aedes vexans (Inland floodwater mosquito).